The following is a 96-amino-acid chain: Complement inhibitor RaCI4 (96 aa).

The N-terminal stretch at 1–24 (MSAFNIFALVVVVCALMINECCTS) is a signal peptide. 3 disulfides stabilise this stretch: C37-C61, C42-C63, and C57-C78.

This sequence belongs to the RaCI family. In terms of tissue distribution, expressed in salivary glands.

The protein resides in the secreted. In terms of biological role, complement inhibitor. Prevents complement-mediated C5 activation by binding to C5. Binds C5 at a different binding site than the other tick complement inhibitors OmCI and CirpT1, and the drug eculizumab. Inhibits complement in human and guinea pig but not in other species tested (rabbit, rat, mouse, and pig). The sequence is that of Complement inhibitor RaCI4 from Hyalomma rufipes (Tick).